The sequence spans 305 residues: Heterogeneous nuclear ribonucleoprotein A0 (305 aa).

Methionine 1 bears the N-acetylmethionine mark. The RRM 1 domain maps to 7–86 (CKLFIGGLNV…VELKRAVSRE (80 aa)). Serine 68 carries the post-translational modification Phosphoserine. A Glycyl lysine isopeptide (Lys-Gly) (interchain with G-Cter in SUMO2) cross-link involves residue lysine 80. Serine 84 carries the phosphoserine; by MAPKAPK2 modification. Glycyl lysine isopeptide (Lys-Gly) (interchain with G-Cter in SUMO2) cross-links involve residues lysine 96, lysine 98, lysine 99, and lysine 106. In terms of domain architecture, RRM 2 spans 98–175 (KKLFVGGLKG…HRVEVKKAVP (78 aa)). Lysine 133 carries the post-translational modification N6-acetyllysine. Arginine 139 carries the omega-N-methylarginine modification. Residues lysine 154, lysine 159, lysine 172, and lysine 176 each participate in a glycyl lysine isopeptide (Lys-Gly) (interchain with G-Cter in SUMO2) cross-link. Disordered stretches follow at residues 174–214 (VPKE…KGGG) and 262–305 (QSSY…GSSF). Gly residues-rich tracts occupy residues 181–200 (SGGGGGGSRSSRGGRGGRGR) and 269–281 (KSGGGGGGGGSSW). Serine 188 is modified (phosphoserine). The residue at position 284 (arginine 284) is an Omega-N-methylarginine. Residues 290 to 305 (YRGGYGGGGGYGGSSF) show a composition bias toward gly residues. Arginine 291 is subject to Asymmetric dimethylarginine; alternate. Arginine 291 carries the post-translational modification Dimethylated arginine; alternate. At arginine 291 the chain carries Omega-N-methylarginine; alternate.

Post-translationally, phosphorylated at Ser-84 by MAPKAPK2 in response to LPS treatment, promoting stabilization of GADD45A mRNA. In terms of processing, arg-291 is dimethylated, probably to asymmetric dimethylarginine.

It is found in the nucleus. Functionally, mRNA-binding component of ribonucleosomes. Specifically binds AU-rich element (ARE)-containing mRNAs. Involved in post-transcriptional regulation of cytokines mRNAs. This chain is Heterogeneous nuclear ribonucleoprotein A0 (HNRNPA0), found in Homo sapiens (Human).